A 386-amino-acid chain; its full sequence is uncharacterized protein (386 aa).

12 consecutive transmembrane segments (helical) span residues 8-28 (VFVI…IAPI), 43-63 (IGLI…PVGV), 79-99 (FFYG…GFLI), 102-122 (IFTG…IAAI), 134-154 (IFNS…GILA), 156-176 (MYGI…AAII), 216-236 (FIIN…LALY), 241-261 (NITI…MALL), 272-292 (LGNI…YLLS), 297-317 (FLTI…SSTA), 342-362 (INIG…ILGI), and 365-385 (MYKF…LRIE).

This sequence belongs to the major facilitator superfamily.

The protein localises to the cell membrane. This is an uncharacterized protein from Methanocaldococcus jannaschii (strain ATCC 43067 / DSM 2661 / JAL-1 / JCM 10045 / NBRC 100440) (Methanococcus jannaschii).